The sequence spans 78 residues: Sec-independent protein translocase protein TatA (78 aa).

Residues 1 to 21 (MGSLSIWHWIVVIGVVLLLFG) traverse the membrane as a helical segment. The segment covering 42–60 (GLQDDEKTAEKPEPVKSID) has biased composition (basic and acidic residues). Residues 42–78 (GLQDDEKTAEKPEPVKSIDHTAPPAAAPRTDVGSKVV) form a disordered region.

This sequence belongs to the TatA/E family. As to quaternary structure, the Tat system comprises two distinct complexes: a TatABC complex, containing multiple copies of TatA, TatB and TatC subunits, and a separate TatA complex, containing only TatA subunits. Substrates initially bind to the TatABC complex, which probably triggers association of the separate TatA complex to form the active translocon.

It is found in the cell inner membrane. Its function is as follows. Part of the twin-arginine translocation (Tat) system that transports large folded proteins containing a characteristic twin-arginine motif in their signal peptide across membranes. TatA could form the protein-conducting channel of the Tat system. The protein is Sec-independent protein translocase protein TatA of Rhodopseudomonas palustris (strain BisB18).